A 142-amino-acid chain; its full sequence is Large ribosomal subunit protein uL13 (142 aa).

It belongs to the universal ribosomal protein uL13 family. As to quaternary structure, part of the 50S ribosomal subunit.

In terms of biological role, this protein is one of the early assembly proteins of the 50S ribosomal subunit, although it is not seen to bind rRNA by itself. It is important during the early stages of 50S assembly. This chain is Large ribosomal subunit protein uL13, found in Cupriavidus necator (strain ATCC 17699 / DSM 428 / KCTC 22496 / NCIMB 10442 / H16 / Stanier 337) (Ralstonia eutropha).